We begin with the raw amino-acid sequence, 1889 residues long: MILKSFIPGNLISLYMTIINSVVMVGLYYGFLTTLSIGPSYIFLLRARFMEEGEEGTEKRVSATTGFIAGQLMMFISIYYVPLHLALGKPHTITVLALPYLLFHFFWNNHKDFFDHRRPTRNSMRNLSIQCVFLNNLIIQLFNHFILPSSMLARLVNIYMFRCNNNMLFVTSSFVGWLIGHILLMKWVGLVLVWIQQNNLIRSNVLIRSNKYLVSEFRNSMARIFSILLFITCVYYLGRIPSPILTKKLKGISEPEEVGESEEERNIEIETISEGGGANQKQGTEENTSSSLFSEEEVDPSKETEKLRVTGKKKKKIKGEFHFRFKETYYKNRPVYETSYLDGNQESSKLEILKKKEDKYLLWIEKPLVTLLFDSKRWNRPLRYIKNDRVENAIKNEMSQYFFYTCQSDGKEKISFTYPPSLATFGEMIQKKIYFFTPEKWFSDELYTDWSFINELKRRNLSKEFIKRVESLDKESFDLGILEKRTRFSNNETKREYLPKLYDPFLHGPYRGRIKKWGSPLSINQTYKKKNTDPSWINKIHALLLTTDYHDLEQTLDTLNIKSLATEKELSLLTLTEDEQGDSEDRVKILKFLFNIVITNPNNQTIRKKSIGIKEISKKVPRWSYKLIDDLEQQEGENEENVTAEHEIRSRKSKRVVIFTNNQANADTYTNTKDAIDPDQTDEVALIRYSQQSDFRRDIIKGSMRAQRRKTITWELFQANVHSPLCLDRVDKPLFFSFDISGPLKRISRNWICKNKESKISDYTEKKIEKKDEAKREKYKREEKMRIEIAEAWDSLLLAQVIRGSVLITQSILRKYIILPSLIIVKNIARMLLFQFPEWSEDLTDWNREMHVKCTYNGVQLSETEFPKNWLTDGIQIKILFPFCLKPWHRFKLQPSHKDPMKKKKGQKNDFCFLTVWGMETELPFGSPRKRRSFFEPIFKELKKKIKKWKTKCFIALTILKEKTKLFRKASKETKKWITQSILFLKGIIKELSKINPIPFFGLREPYELGETKKDSIISNKMIHKSSLQIQSMSWTNYSLTEKKIKDLTKRTNTIKNQIQKILIIKDKKNEFLTQEINSSSNKISYQDKILESSKKFWQIVKRRNIRLIRKFYFFINFFIEKIYMDILLYIINIPRTNTQLFLESTKKMIENFIHNNEANQERINKTTKNTTHFISTIKTSLSSLSNISIRNKNEKAFCDLSSLSQAYVFYKLSQTQVISFYKFKPILQYHGTSLFLKNEIKDYFEERGVSHSRLRHHYGLRQKIVWHSGMNEWKNWLRSRYQYDLVQNRWLKLGPGQWRNGVNQHYLAQNKHLPKWDSDEKERLIHYEKKNDFQANSLLTQEYKLNQEQKYKKSNFKKHYGYDFLSYKSINYQDKRDPYAYGSPFQVNKREESSYHYNMDKQNFFDTLRDIPIHNYLGEGDILDAMGNFSHRKFFNWRILDFCLRNKVDIESWVDTSTKSKKNIKTVVKNYQIIDKMDLFYFTIYQDQESNPSNKKGSHFDWMGLNEEILSHPIPNLELWFFPEFVLLYNAYKVKPWIIPIKLLLFNFNGNRNINKNIIENKKRDSLIAPNEKQIIGLENRNQEEKEPIGEGGLVSDAQKQGNFKSVLSNQEKDVEEDYDKSDKKKRRKKKQYKSNTEAELDFFLKRYLRFQLRWDDSLNQRIINNIKVYCLLLRLINPNEIVISSIQRGEMNLDILMIQKDLTLRELMKKGILIIDPVRLSVKNDGQFILYQTISILLVHKNKHQINQRYQEKNYIDKNHFYEFIARHQKMTENKDKNHYDLFVPENILSPNHRRELRIRISFNSRDKNGMHRNAVFLNNVKNCGQVLTKNKHLDSDKKKLIKLKFFLWPNYRLEDLACMNRYWFNTNNGSRFSMIRIRMYPRLKIR.

6 helical membrane passes run 11–31, 67–87, 88–108, 127–147, 175–195, and 224–244; these read LISL…YYGF, FIAG…HLAL, GKPH…FFWN, LSIQ…HFIL, VGWL…LVWI, and IFSI…PSPI. The segment covering 255–265 has biased composition (acidic residues); the sequence is PEEVGESEEER. Disordered stretches follow at residues 255–303 and 1610–1633; these read PEEV…PSKE and SNQE…KKKQ. A compositionally biased stretch (polar residues) spans 279-293; it reads NQKQGTEENTSSSLF.

This sequence belongs to the TIC214 family. Part of the Tic complex.

The protein localises to the plastid. It is found in the chloroplast inner membrane. Involved in protein precursor import into chloroplasts. May be part of an intermediate translocation complex acting as a protein-conducting channel at the inner envelope. This is Protein TIC 214 from Gossypium barbadense (Sea Island cotton).